The primary structure comprises 339 residues: Protein RecA (339 aa).

An ATP-binding site is contributed by G73–T80.

This sequence belongs to the RecA family.

The protein resides in the cytoplasm. Its function is as follows. Can catalyze the hydrolysis of ATP in the presence of single-stranded DNA, the ATP-dependent uptake of single-stranded DNA by duplex DNA, and the ATP-dependent hybridization of homologous single-stranded DNAs. It interacts with LexA causing its activation and leading to its autocatalytic cleavage. The polypeptide is Protein RecA (Mycoplasmopsis pulmonis (strain UAB CTIP) (Mycoplasma pulmonis)).